A 961-amino-acid chain; its full sequence is Thrombospondin-4 (961 aa).

The first 23 residues, 1–23, serve as a signal peptide directing secretion; the sequence is MLAPRGATFLLLHLALQPWLGAG. The Laminin G-like domain occupies 24-192; it reads AQATPQVFDL…LEELKLVVRG (169 aa). The EGF-like 1 domain occupies 286–325; the sequence is PVRRCDSNPCFRGVRCTDTRDGFQCGPCPEGYTGNGIVCS. 21 disulfides stabilise this stretch: cysteine 290-cysteine 301, cysteine 295-cysteine 310, cysteine 313-cysteine 324, cysteine 330-cysteine 341, cysteine 335-cysteine 350, cysteine 353-cysteine 377, cysteine 383-cysteine 394, cysteine 388-cysteine 403, cysteine 406-cysteine 418, cysteine 424-cysteine 438, cysteine 432-cysteine 448, cysteine 450-cysteine 461, cysteine 477-cysteine 482, cysteine 487-cysteine 507, cysteine 523-cysteine 543, cysteine 546-cysteine 566, cysteine 582-cysteine 602, cysteine 605-cysteine 625, cysteine 643-cysteine 663, cysteine 683-cysteine 703, and cysteine 719-cysteine 940. In terms of domain architecture, EGF-like 2; calcium-binding spans 326–363; that stretch reads DVDECRYHPCYPGVRCVNLAPGFRCDACPVGFTGPMMQ. The EGF-like 3; calcium-binding domain maps to 379–419; sequence DIDECRNGACVLNSICINTLGSYRCGPCKPGYIGDQMRGCK. The EGF-like 4 domain maps to 420-462; sequence MERNCRDPELNPCSVNAQCIEERQGDVTCVCGVGWAGDGYICG. TSP type-3 repeat units lie at residues 463–495, 496–531, 532–554, 555–590, 591–613, 614–651, 652–691, and 692–727; these read KDVD…NSGQ, EDAD…NVDQ, RNSD…NNDQ, KDTD…NSDQ, EDRD…NPNQ, SDVD…NSAQ, LDTD…NPAQ, and EDSN…EVTL. The Cell attachment site motif lies at 562-564; sequence KGD. The tract at residues 581–671 is disordered; the sequence is NCQKVPNSDQ…ECDDDDDNDG (91 aa). Residue asparagine 612 is glycosylated (N-linked (GlcNAc...) asparagine). Residues 640-652 show a composition bias toward polar residues; that stretch reads TDNCPTVINSAQL. Residues 660 to 671 show a composition bias toward acidic residues; the sequence is GDECDDDDDNDG. Residues 731 to 945 form the TSP C-terminal domain; the sequence is RAYQTVVLDP…LKYRCNDTIP (215 aa). N-linked (GlcNAc...) asparagine glycosylation occurs at asparagine 941.

It belongs to the thrombospondin family. As to quaternary structure, homopentamer; disulfide-linked. Interacts with PTBP3. Interacts (via EGF-like 3; calcium-binding domain) with ATF6 and facilitates its processing, activation and nuclear translocation. Interacts with NOTCH1.

Its subcellular location is the endoplasmic reticulum. It is found in the sarcoplasmic reticulum. It localises to the secreted. The protein localises to the extracellular space. The protein resides in the extracellular matrix. Adhesive glycoprotein that mediates cell-to-cell and cell-to-matrix interactions and is involved in various processes including cellular proliferation, migration, adhesion and attachment, inflammatory response to CNS injury, regulation of vascular inflammation and adaptive responses of the heart to pressure overload and in myocardial function and remodeling. Binds to structural extracellular matrix (ECM) proteins and modulates the ECM in response to tissue damage, contributing to cardioprotective and adaptive ECM remodeling. Plays a role in ER stress response, via its interaction with the activating transcription factor 6 alpha (ATF6) which produces adaptive ER stress response factors and protects myocardium from pressure overload. May contribute to spinal presynaptic hypersensitivity and neuropathic pain states after peripheral nerve injury. May play a role in regulating protective astrogenesis from the subventricular zone (SVZ) niche after injury in a NOTCH1-dependent manner. The chain is Thrombospondin-4 (THBS4) from Bos taurus (Bovine).